We begin with the raw amino-acid sequence, 255 residues long: MIFDRRRYGKDNYTYLLAAGGDAALVDPGDPDAALALAAAHGVRPRWILHTHGHADHTGGTAAVARALGAQVLGHGGDAARYRPDVDLAGRAEVALGALALRVHPVPGHTPGSVLLEWEGRLLTGDTLFWAGCGNCRHGGDPARLAESFLGPIARLDGGLEVHPGHDYAAPNLAFALALEPDGAAARARLAEVEAAHAAGLEPAPSTLAGERAVNPFLRLDAPGVAAAVARAEPSAAAAGPARRFVALRALRDRA.

7 residues coordinate Zn(2+): His52, His54, Asp56, His57, His109, Asp126, and His166.

Belongs to the metallo-beta-lactamase superfamily. Glyoxalase II family. As to quaternary structure, monomer. Requires Zn(2+) as cofactor.

It catalyses the reaction an S-(2-hydroxyacyl)glutathione + H2O = a 2-hydroxy carboxylate + glutathione + H(+). It participates in secondary metabolite metabolism; methylglyoxal degradation; (R)-lactate from methylglyoxal: step 2/2. In terms of biological role, thiolesterase that catalyzes the hydrolysis of S-D-lactoyl-glutathione to form glutathione and D-lactic acid. This chain is Hydroxyacylglutathione hydrolase, found in Anaeromyxobacter dehalogenans (strain 2CP-C).